We begin with the raw amino-acid sequence, 348 residues long: Olfactory receptor 2T4 (348 aa).

The Extracellular segment spans residues 1-57 (MDNITWMASHTGWSDFILMGLFRQSKHPMANITWMANHTGWSDFILLGLFRQSKHPA). Asn-31 and Asn-37 each carry an N-linked (GlcNAc...) asparagine glycan. A helical membrane pass occupies residues 58-81 (LLCVVIFVVFLMALSGNAVLILLI). Over 82 to 89 (HCDAHLHT) the chain is Cytoplasmic. A helical membrane pass occupies residues 90 to 111 (PMYFFISQLSLMDMAYISVTVP). The Extracellular segment spans residues 112–132 (KMLLDQVMGVNKISAPECGMQ). An intrachain disulfide couples Cys-129 to Cys-221. A helical transmembrane segment spans residues 133–152 (MFFYVTLAGSEFFLLATMAY). Topologically, residues 153-171 (DRYVAICHPLRYPVLMNHR) are cytoplasmic. The chain crosses the membrane as a helical span at residues 172–190 (VCLFLSSGCWFLGSVDGFT). Topologically, residues 191 to 227 (FTPITMTFPFRGSREIHHFFCEVPAVLNLSCSDTSLY) are extracellular. The N-linked (GlcNAc...) asparagine glycan is linked to Asn-218. The chain crosses the membrane as a helical span at residues 228 to 251 (EIFMYLCCVLMLLIPVVIISSSYL). Over 252-268 (LILLTIHGMNSAEGRKK) the chain is Cytoplasmic. The helical transmembrane segment at 269–291 (AFATCSSHLTVVILFYGAAIYTY) threads the bilayer. At 292 to 304 (MLPSSYHTPEKDM) the chain is on the extracellular side. Residues 305-324 (MVSVFYTILTPVVNPLIYSL) traverse the membrane as a helical segment. Over 325–348 (RNKDVMGALKKMLTVEPAFQKAME) the chain is Cytoplasmic.

Belongs to the G-protein coupled receptor 1 family.

Its subcellular location is the cell membrane. Its function is as follows. Odorant receptor. This is Olfactory receptor 2T4 (OR2T4) from Homo sapiens (Human).